The primary structure comprises 520 residues: MSRFQSLLAFVVASLAAVAHAAIGPTADLTISNAEVSPDGFARQAVVVNNVTPGPLVAGNKGDRFQLNVIDNLTNHTMLKSTSIHWHGFFQKGTNWADGPAFVNQCPISSGHSFLYDFQVPDQAGTFWYHSHLSTQYCDGLRGPFVVYDPNDPHASLYDVDNDDTVITLADWYHTAAKLGPAFPLGADATLINGLGRSPSTTAADLAVINVTKGKRYRFRLVSLSCDPNHTFSIDGHDLTIIEVDSINSQPLVVDSIQIFAAQRYSFVLNADQDVGNYWIRANPNFGNVGFAGGINSAILRYDGADPVEPTTTQTTPTKPLNEVDLHPLATMAVPGSPVAGGVDTAINMAFNFNGTNFFINGASFVPPTVPVLLQIISGAQNAQDLLPSGSVYSLPSNADIEISFPATAAAPGAPHPFHLHGHAFAVVRSAGSTVYNYDNPIFRDVVSTGTPAAGDNVTIRFRTDNPGPWFLHCHIDFHLEAGFAVVFAEDIPDVASANPVPQAWSDLCPIYDALDVNDQ.

Positions 1-21 (MSRFQSLLAFVVASLAAVAHA) are cleaved as a signal peptide. Plastocyanin-like domains are found at residues 23 to 148 (IGPT…FVVY) and 160 to 302 (VDND…ILRY). N72 and N75 each carry an N-linked (GlcNAc...) asparagine glycan. Cu cation is bound by residues H85, H87, H130, and H132. 2 disulfides stabilise this stretch: C106/C509 and C138/C226. N210, N229, and N354 each carry an N-linked (GlcNAc...) asparagine glycan. The region spanning 369-491 (TVPVLLQIIS…AGFAVVFAED (123 aa)) is the Plastocyanin-like 3 domain. Cu cation contacts are provided by H416, H419, H421, H473, C474, H475, and H479.

This sequence belongs to the multicopper oxidase family. The cofactor is Cu cation.

It is found in the secreted. The catalysed reaction is 4 hydroquinone + O2 = 4 benzosemiquinone + 2 H2O. Functionally, lignin degradation and detoxification of lignin-derived products. Has activity towards guaiacol. The polypeptide is Laccase (Trametes hirsuta (White-rot fungus)).